Consider the following 145-residue polypeptide: Brain and acute leukemia cytoplasmic protein (145 aa).

Glycine 2 carries N-myristoyl glycine lipidation. The S-palmitoyl cysteine moiety is linked to residue cysteine 3. An interaction with CAMK2A region spans residues 3-35 (CGGSRADAIEPRYYESWTRETESTWLTYTDSDA). Residues 27–119 (WLTYTDSDAP…AKRDAKRMPA (93 aa)) form a disordered region. A compositionally biased stretch (low complexity) spans 32 to 46 (DSDAPPSAAAPDSGP). Positions 83–108 (CETQCPNPQSLSSGPLTQKQNGLQTT) are enriched in polar residues. The span at 109 to 119 (EAKRDAKRMPA) shows a compositional bias: basic and acidic residues.

Interacts with CAMK2A. Palmitoylation and myristoylation target the protein to the lipid rafts. In terms of tissue distribution, predominantly expressed in neuroectoderm-derived tissues. Expressed in the brain and spinal cord, and at low levels, in the adrenal gland. In the bone marrow, confined to the CD34+ progenitor cells. Not found in peripheral blood mononuclear cells, nor lymph nodes. Tends to be expressed at high levels in acute myeloid leukemia and glioblastoma cells.

The protein resides in the cytoplasm. Its subcellular location is the synapse. The protein localises to the synaptosome. It is found in the membrane raft. It localises to the postsynaptic density. May play a synaptic role at the postsynaptic lipid rafts possibly through interaction with CAMK2A. This is Brain and acute leukemia cytoplasmic protein from Homo sapiens (Human).